Here is a 427-residue protein sequence, read N- to C-terminus: Anhydro-N-acetylmuramic acid kinase (427 aa).

Residue 32–39 (GTSLDGMD) participates in ATP binding.

The protein belongs to the anhydro-N-acetylmuramic acid kinase family.

It carries out the reaction 1,6-anhydro-N-acetyl-beta-muramate + ATP + H2O = N-acetyl-D-muramate 6-phosphate + ADP + H(+). It participates in amino-sugar metabolism; 1,6-anhydro-N-acetylmuramate degradation. Its pathway is cell wall biogenesis; peptidoglycan recycling. Catalyzes the specific phosphorylation of 1,6-anhydro-N-acetylmuramic acid (anhMurNAc) with the simultaneous cleavage of the 1,6-anhydro ring, generating MurNAc-6-P. Is required for the utilization of anhMurNAc either imported from the medium or derived from its own cell wall murein, and thus plays a role in cell wall recycling. This chain is Anhydro-N-acetylmuramic acid kinase, found in Psychrobacter cryohalolentis (strain ATCC BAA-1226 / DSM 17306 / VKM B-2378 / K5).